A 403-amino-acid chain; its full sequence is MQIYLVGGAVRDQLLQLPVYDRDWVVVGSSPQAMLAAGFQAVGKDFPVFLHPNSKEEHALARTERKTSVGYTGFACHYAPDVTLEEDLLRRDLTINAMAQDNSGQLIDPYGGQRDLAAKVLRHVSPAFVEDPLRVLRVARFAAKLHHLGFTVAEETMQLMAKIAQSGELQHLTAERVWQEWHKSLSAHHPEMFLQVLRDCGALAVVLPEIDRLFGVPQPEKWHPEIDTGIHTLMVAKQAAQLSDSLLVRFAAQVHDLGKGVTPPSEWPRHKLHCHTGLNIIESLCERIRVPNEFRDLALAVCAQHSNIHRADELKPTTKLKVLGLLDVWRKPERLEQVLLCCEADHRGRLGLESEPYPQREIFLRAYQAALGVAVQAVIADGFQGKHIKEELDKRRVSAIEAL.

Gly8 and Arg11 together coordinate ATP. Residues Gly8 and Arg11 each contribute to the CTP site. Mg(2+) is bound by residues Asp21 and Asp23. Arg91, Arg137, and Arg140 together coordinate ATP. CTP contacts are provided by Arg91, Arg137, and Arg140. The 102-residue stretch at Thr228 to Trp329 folds into the HD domain.

This sequence belongs to the tRNA nucleotidyltransferase/poly(A) polymerase family. Bacterial CCA-adding enzyme type 1 subfamily. As to quaternary structure, monomer. Can also form homodimers and oligomers. The cofactor is Mg(2+). Requires Ni(2+) as cofactor.

The catalysed reaction is a tRNA precursor + 2 CTP + ATP = a tRNA with a 3' CCA end + 3 diphosphate. The enzyme catalyses a tRNA with a 3' CCA end + 2 CTP + ATP = a tRNA with a 3' CCACCA end + 3 diphosphate. Catalyzes the addition and repair of the essential 3'-terminal CCA sequence in tRNAs without using a nucleic acid template. Adds these three nucleotides in the order of C, C, and A to the tRNA nucleotide-73, using CTP and ATP as substrates and producing inorganic pyrophosphate. tRNA 3'-terminal CCA addition is required both for tRNA processing and repair. Also involved in tRNA surveillance by mediating tandem CCA addition to generate a CCACCA at the 3' terminus of unstable tRNAs. While stable tRNAs receive only 3'-terminal CCA, unstable tRNAs are marked with CCACCA and rapidly degraded. The protein is Multifunctional CCA protein of Vibrio cholerae serotype O1 (strain ATCC 39315 / El Tor Inaba N16961).